The chain runs to 588 residues: Lamin-B1 (588 aa).

Over residues 1 to 12 (MATATPVQQQRA) the composition is skewed to polar residues. The interval 1 to 34 (MATATPVQQQRAGSRASAPATPLSPTRLSRLQEK) is disordered. An N-acetylalanine modification is found at A2. Residues 2-35 (ATATPVQQQRAGSRASAPATPLSPTRLSRLQEKE) are head. Residues T3 and T5 each carry the phosphothreonine modification. At R15 the chain carries Omega-N-methylarginine. At S17 the chain carries Phosphoserine. Phosphothreonine is present on T21. S24 bears the Phosphoserine mark. T26 bears the Phosphothreonine mark. S29 is modified (phosphoserine). The 357-residue stretch at 33 to 389 (EKEELRELND…KLLEGEEERL (357 aa)) folds into the IF rod domain. A coil 1A region spans residues 36–70 (ELRELNDRLAVYIDKVRSLETENSALQLQVTEREE). The segment at 71 to 82 (VRGRELTGLKAL) is linker 1. The interval 83-216 (YETELADARR…EFRKNMYEEE (134 aa)) is coil 1B. Residue K103 forms a Glycyl lysine isopeptide (Lys-Gly) (interchain with G-Cter in SUMO2) linkage. N6-acetyllysine is present on K112. K124 is covalently cross-linked (Glycyl lysine isopeptide (Lys-Gly) (interchain with G-Cter in SUMO2)). Residue S127 is modified to Phosphoserine. A Glycyl lysine isopeptide (Lys-Gly) (interchain with G-Cter in SUMO2) cross-link involves residue K146. At K158 the chain carries N6-acetyllysine; alternate. A Glycyl lysine isopeptide (Lys-Gly) (interchain with G-Cter in SUMO2); alternate cross-link involves residue K158. Position 159 is a phosphoserine (S159). A Glycyl lysine isopeptide (Lys-Gly) (interchain with G-Cter in SUMO2) cross-link involves residue K182. S201 and S233 each carry phosphoserine. The interval 217 to 244 (INETRRKHETRLVEVDSGRQIEYEYKLA) is linker 2. Residues K242 and K262 each participate in a glycyl lysine isopeptide (Lys-Gly) (interchain with G-Cter in SUMO2) cross-link. Residues 245-387 (QALHEMREQH…YRKLLEGEEE (143 aa)) are coil 2. An N6-acetyllysine; alternate modification is found at K272. K272 is covalently cross-linked (Glycyl lysine isopeptide (Lys-Gly) (interchain with G-Cter in SUMO2); alternate). Phosphoserine is present on residues S279 and S303. K313 is covalently cross-linked (Glycyl lysine isopeptide (Lys-Gly) (interchain with G-Cter in SUMO2)). Position 331 is an N6-acetyllysine; alternate (K331). K331 participates in a covalent cross-link: Glycyl lysine isopeptide (Lys-Gly) (interchain with G-Cter in SUMO2); alternate. Phosphoserine is present on residues S376 and S394. The tail stretch occupies residues 388-588 (RLKLSPSPSS…RASNKSCAIM (201 aa)). Over residues 391–410 (LSPSPSSRVTVSRASSSRSV) the composition is skewed to low complexity. The disordered stretch occupies residues 391–433 (LSPSPSSRVTVSRASSSRSVRTTRGKRKRVDVEESEASSSVSI). O-linked (GlcNAc) threonine glycosylation occurs at T400. An Omega-N-methylarginine modification is found at R414. Residues 416–421 (KRKRVD) carry the Nuclear localization signal motif. The LTD domain occupies 431–547 (VSISHSASAT…EEVAQRSTVF (117 aa)). Position 484 is an N6-acetyllysine (K484). K533 participates in a covalent cross-link: Glycyl lysine isopeptide (Lys-Gly) (interchain with G-Cter in SUMO2). Residue S535 is modified to Phosphoserine. Residue K548 forms a Glycyl lysine isopeptide (Lys-Gly) (interchain with G-Cter in SUMO2) linkage. C585 is subject to Cysteine methyl ester. A lipid anchor (S-farnesyl cysteine) is attached at C585. Residues 586–588 (AIM) constitute a propeptide, removed in mature form.

Belongs to the intermediate filament family. In terms of assembly, homodimer. Lamin dimers then assemble into dimeric head-to-tail polymers. Ultimately, two head-to-tail polymers assemble laterally into a protofilament with a uniformly shaped rod of 3.5 nm in diameter. Interacts with SPAG4 and SEPT12. Post-translationally, B-type lamins undergo a series of modifications, such as farnesylation and phosphorylation. Increased phosphorylation of the lamins occurs before envelope disintegration and probably plays a role in regulating lamin associations. In terms of processing, phosphorylation plays a key role in lamin organization, subcellular localization and nuclear envelope disintegration. Phosphorylation by CDK1 at Ser-24 and Ser-394 at the onset of mitosis drives lamin disassembly and nuclear envelope breakdown.

The protein localises to the nucleus lamina. Functionally, lamins are intermediate filament proteins that assemble into a filamentous meshwork, and which constitute the major components of the nuclear lamina, a fibrous layer on the nucleoplasmic side of the inner nuclear membrane. Lamins provide a framework for the nuclear envelope, bridging the nuclear envelope and chromatin, thereby playing an important role in nuclear assembly, chromatin organization, nuclear membrane and telomere dynamics. The structural integrity of the lamina is strictly controlled by the cell cycle, as seen by the disintegration and formation of the nuclear envelope in prophase and telophase, respectively. This chain is Lamin-B1 (Lmnb1), found in Mus musculus (Mouse).